Consider the following 385-residue polypeptide: Probable tRNA sulfurtransferase (385 aa).

The THUMP domain maps to 57-160 (DGVIERVKKV…RGNAYVFTDK (104 aa)). ATP is bound by residues 180-181 (ML), 205-206 (YY), arginine 262, glycine 284, and glutamine 293.

It belongs to the ThiI family.

The protein localises to the cytoplasm. It catalyses the reaction [ThiI sulfur-carrier protein]-S-sulfanyl-L-cysteine + a uridine in tRNA + 2 reduced [2Fe-2S]-[ferredoxin] + ATP + H(+) = [ThiI sulfur-carrier protein]-L-cysteine + a 4-thiouridine in tRNA + 2 oxidized [2Fe-2S]-[ferredoxin] + AMP + diphosphate. It carries out the reaction [ThiS sulfur-carrier protein]-C-terminal Gly-Gly-AMP + S-sulfanyl-L-cysteinyl-[cysteine desulfurase] + AH2 = [ThiS sulfur-carrier protein]-C-terminal-Gly-aminoethanethioate + L-cysteinyl-[cysteine desulfurase] + A + AMP + 2 H(+). It participates in cofactor biosynthesis; thiamine diphosphate biosynthesis. In terms of biological role, catalyzes the ATP-dependent transfer of a sulfur to tRNA to produce 4-thiouridine in position 8 of tRNAs, which functions as a near-UV photosensor. Also catalyzes the transfer of sulfur to the sulfur carrier protein ThiS, forming ThiS-thiocarboxylate. This is a step in the synthesis of thiazole, in the thiamine biosynthesis pathway. The sulfur is donated as persulfide by IscS. In Clostridium perfringens (strain ATCC 13124 / DSM 756 / JCM 1290 / NCIMB 6125 / NCTC 8237 / Type A), this protein is Probable tRNA sulfurtransferase.